An 85-amino-acid polypeptide reads, in one-letter code: Large ribosomal subunit protein bL27 (85 aa).

A disordered region spans residues 1-21; it reads MAHKKAGGSSRNGRDSEAKRL.

This sequence belongs to the bacterial ribosomal protein bL27 family.

The sequence is that of Large ribosomal subunit protein bL27 from Aeromonas hydrophila subsp. hydrophila (strain ATCC 7966 / DSM 30187 / BCRC 13018 / CCUG 14551 / JCM 1027 / KCTC 2358 / NCIMB 9240 / NCTC 8049).